A 176-amino-acid polypeptide reads, in one-letter code: Shikimate kinase (176 aa).

12 to 17 contributes to the ATP binding site; the sequence is GSGKST. Ser-16 contributes to the Mg(2+) binding site. Asp-34, Arg-58, and Gly-80 together coordinate substrate. Arg-117 provides a ligand contact to ATP. Arg-136 provides a ligand contact to substrate. Arg-153 serves as a coordination point for ATP.

The protein belongs to the shikimate kinase family. In terms of assembly, monomer. The cofactor is Mg(2+).

Its subcellular location is the cytoplasm. The enzyme catalyses shikimate + ATP = 3-phosphoshikimate + ADP + H(+). Its pathway is metabolic intermediate biosynthesis; chorismate biosynthesis; chorismate from D-erythrose 4-phosphate and phosphoenolpyruvate: step 5/7. Its function is as follows. Catalyzes the specific phosphorylation of the 3-hydroxyl group of shikimic acid using ATP as a cosubstrate. This is Shikimate kinase from Mycobacterium bovis (strain ATCC BAA-935 / AF2122/97).